The following is a 186-amino-acid chain: Interferon beta-3 (186 aa).

Residues 1 to 21 form the signal peptide; the sequence is MTYRCLLPMVLLLCFSTTALS. Cys-52 and Cys-161 form a disulfide bridge. 2 N-linked (GlcNAc...) asparagine glycosylation sites follow: Asn-131 and Asn-173.

It belongs to the alpha/beta interferon family. In terms of assembly, monomer.

Its subcellular location is the secreted. In terms of biological role, has antiviral, antibacterial and anticancer activities. The chain is Interferon beta-3 (IFNB3) from Bos taurus (Bovine).